A 105-amino-acid polypeptide reads, in one-letter code: uncharacterized protein (105 aa).

Residues 29 to 49 traverse the membrane as a helical segment; it reads NAFLLILSEAYLLFVFLSYLI.

The protein localises to the membrane. This is an uncharacterized protein from Saccharomyces cerevisiae (strain ATCC 204508 / S288c) (Baker's yeast).